We begin with the raw amino-acid sequence, 35 residues long: Photosystem II reaction center protein T (35 aa).

The helical transmembrane segment at 3 to 23 threads the bilayer; it reads ALVYTFLLXSTLGIIFFAIFF.

Belongs to the PsbT family. PSII is composed of 1 copy each of membrane proteins PsbA, PsbB, PsbC, PsbD, PsbE, PsbF, PsbH, PsbI, PsbJ, PsbK, PsbL, PsbM, PsbT, PsbY, PsbZ, Psb30/Ycf12, at least 3 peripheral proteins of the oxygen-evolving complex and a large number of cofactors. It forms dimeric complexes.

The protein resides in the plastid. It localises to the chloroplast thylakoid membrane. Found at the monomer-monomer interface of the photosystem II (PS II) dimer, plays a role in assembly and dimerization of PSII. PSII is a light-driven water plastoquinone oxidoreductase, using light energy to abstract electrons from H(2)O, generating a proton gradient subsequently used for ATP formation. This is Photosystem II reaction center protein T from Cunninghamia lanceolata (China fir).